A 341-amino-acid polypeptide reads, in one-letter code: MTVRVAVAGASGYAGGEVVRLLLGHPAESWVALTAFSQAGQAVGHPHLGPVAGRVFEPISAQAPLAGHDVVFLALPPAQSAALAEEAGARVVDRNMGADFRLRDAGVWERFYGSPWRGCWPYGLPESPGAREALAGARRIAVPGCYPTAVTLALFPAVGAGLVDREVVTAVSGTSGAGRALKPHLLGAEVMGSVSPYAVGGTHRHTPEIAQNSTAVTDGEPVSVSFTPLLAPMPRGILATCSARLTPGTDARQVRAVYEKTYADEPFVSLLPEGVWPSTGAVLGSNQVQVQVAVDPAADRLVVVSAIDNLTKGTAGGALQSMNLALGLPETTGLPRTGLAP.

Cys-145 is an active-site residue.

It belongs to the NAGSA dehydrogenase family. Type 1 subfamily.

It localises to the cytoplasm. It carries out the reaction N-acetyl-L-glutamate 5-semialdehyde + phosphate + NADP(+) = N-acetyl-L-glutamyl 5-phosphate + NADPH + H(+). Its pathway is amino-acid biosynthesis; L-arginine biosynthesis; N(2)-acetyl-L-ornithine from L-glutamate: step 3/4. In terms of biological role, catalyzes the NADPH-dependent reduction of N-acetyl-5-glutamyl phosphate to yield N-acetyl-L-glutamate 5-semialdehyde. This is N-acetyl-gamma-glutamyl-phosphate reductase from Streptomyces clavuligerus.